Reading from the N-terminus, the 508-residue chain is Lysine--tRNA ligase (508 aa).

The Mg(2+) site is built by Glu-418 and Glu-425.

This sequence belongs to the class-II aminoacyl-tRNA synthetase family. As to quaternary structure, homodimer. Mg(2+) is required as a cofactor.

It is found in the cytoplasm. It carries out the reaction tRNA(Lys) + L-lysine + ATP = L-lysyl-tRNA(Lys) + AMP + diphosphate. The protein is Lysine--tRNA ligase of Burkholderia ambifaria (strain MC40-6).